The primary structure comprises 227 residues: Cytochrome c oxidase subunit 2 (227 aa).

Over 1–14 (MAYPFQLGFQDATS) the chain is Mitochondrial intermembrane. Residues 15–45 (PIMEELLHFHDHALMIVFLISSLVLYLISVM) traverse the membrane as a helical segment. Residues 46-59 (LTTSLTHTSTMDAQ) lie on the Mitochondrial matrix side of the membrane. The chain crosses the membrane as a helical span at residues 60 to 87 (EVETIWTILPAMILIMIALPSLRILYMM). Topologically, residues 88 to 227 (DEINNPYLTV…YFEKWSSSML (140 aa)) are mitochondrial intermembrane. Residues histidine 161, cysteine 196, glutamate 198, cysteine 200, histidine 204, and methionine 207 each contribute to the Cu cation site. Position 198 (glutamate 198) interacts with Mg(2+). At tyrosine 218 the chain carries Phosphotyrosine.

The protein belongs to the cytochrome c oxidase subunit 2 family. Component of the cytochrome c oxidase (complex IV, CIV), a multisubunit enzyme composed of 14 subunits. The complex is composed of a catalytic core of 3 subunits MT-CO1, MT-CO2 and MT-CO3, encoded in the mitochondrial DNA, and 11 supernumerary subunits COX4I, COX5A, COX5B, COX6A, COX6B, COX6C, COX7A, COX7B, COX7C, COX8 and NDUFA4, which are encoded in the nuclear genome. The complex exists as a monomer or a dimer and forms supercomplexes (SCs) in the inner mitochondrial membrane with NADH-ubiquinone oxidoreductase (complex I, CI) and ubiquinol-cytochrome c oxidoreductase (cytochrome b-c1 complex, complex III, CIII), resulting in different assemblies (supercomplex SCI(1)III(2)IV(1) and megacomplex MCI(2)III(2)IV(2)). Found in a complex with TMEM177, COA6, COX18, COX20, SCO1 and SCO2. Interacts with TMEM177 in a COX20-dependent manner. Interacts with COX20. Interacts with COX16. It depends on Cu cation as a cofactor.

The protein resides in the mitochondrion inner membrane. It carries out the reaction 4 Fe(II)-[cytochrome c] + O2 + 8 H(+)(in) = 4 Fe(III)-[cytochrome c] + 2 H2O + 4 H(+)(out). Its function is as follows. Component of the cytochrome c oxidase, the last enzyme in the mitochondrial electron transport chain which drives oxidative phosphorylation. The respiratory chain contains 3 multisubunit complexes succinate dehydrogenase (complex II, CII), ubiquinol-cytochrome c oxidoreductase (cytochrome b-c1 complex, complex III, CIII) and cytochrome c oxidase (complex IV, CIV), that cooperate to transfer electrons derived from NADH and succinate to molecular oxygen, creating an electrochemical gradient over the inner membrane that drives transmembrane transport and the ATP synthase. Cytochrome c oxidase is the component of the respiratory chain that catalyzes the reduction of oxygen to water. Electrons originating from reduced cytochrome c in the intermembrane space (IMS) are transferred via the dinuclear copper A center (CU(A)) of subunit 2 and heme A of subunit 1 to the active site in subunit 1, a binuclear center (BNC) formed by heme A3 and copper B (CU(B)). The BNC reduces molecular oxygen to 2 water molecules using 4 electrons from cytochrome c in the IMS and 4 protons from the mitochondrial matrix. This Rousettus leschenaultii (Leschenault's rousette) protein is Cytochrome c oxidase subunit 2 (MT-CO2).